Reading from the N-terminus, the 239-residue chain is Ribonuclease PH (239 aa).

Phosphate contacts are provided by residues Arg87 and 125–127; that span reads GTR.

The protein belongs to the RNase PH family. Homohexameric ring arranged as a trimer of dimers.

The enzyme catalyses tRNA(n+1) + phosphate = tRNA(n) + a ribonucleoside 5'-diphosphate. Functionally, phosphorolytic 3'-5' exoribonuclease that plays an important role in tRNA 3'-end maturation. Removes nucleotide residues following the 3'-CCA terminus of tRNAs; can also add nucleotides to the ends of RNA molecules by using nucleoside diphosphates as substrates, but this may not be physiologically important. Probably plays a role in initiation of 16S rRNA degradation (leading to ribosome degradation) during starvation. In Syntrophomonas wolfei subsp. wolfei (strain DSM 2245B / Goettingen), this protein is Ribonuclease PH.